The sequence spans 60 residues: Large ribosomal subunit protein bL32 (60 aa).

The span at 1–20 (MAVQKSRKSRSRRDMRRSHH) shows a compositional bias: basic residues. The segment at 1-22 (MAVQKSRKSRSRRDMRRSHHRM) is disordered.

It belongs to the bacterial ribosomal protein bL32 family.

This Psychrobacter arcticus (strain DSM 17307 / VKM B-2377 / 273-4) protein is Large ribosomal subunit protein bL32.